Reading from the N-terminus, the 293-residue chain is MNEEITLLAAAADPAATENIGWVQTIVLSIVQGLTEFLPISSSGHLRIISELFWGADAGASFTAVVQLGTEAAVLVFFAKEIWQIITGWFAGVFNKERRGFEYRMGWMIIVATIPVVILGVLGKDLIREALRNMWITASVLILFSLVFILAEKMGKKERDYDKLTMKDAIIMGLAQCLALIPGVSRSGGTISAGLFLGLKREVATKFSFLLAIPAVLGSGLYSLPDAFAPSSGQAASGLQLTVGTLVAFVVGYISIAWLMKFVANHSFSWFAAYRIPAGLLVMLLLALGMLNP.

6 helical membrane passes run Val74 to Phe94, Trp107 to Ile127, Met134 to Met154, Phe209 to Ala229, Val243 to Val263, and Phe271 to Leu291.

It belongs to the UppP family.

Its subcellular location is the cell membrane. The enzyme catalyses di-trans,octa-cis-undecaprenyl diphosphate + H2O = di-trans,octa-cis-undecaprenyl phosphate + phosphate + H(+). Functionally, catalyzes the dephosphorylation of undecaprenyl diphosphate (UPP). Confers resistance to bacitracin. The polypeptide is Undecaprenyl-diphosphatase (Corynebacterium glutamicum (strain ATCC 13032 / DSM 20300 / JCM 1318 / BCRC 11384 / CCUG 27702 / LMG 3730 / NBRC 12168 / NCIMB 10025 / NRRL B-2784 / 534)).